The sequence spans 277 residues: Urease accessory protein UreD (277 aa).

This sequence belongs to the UreD family. As to quaternary structure, ureD, UreF and UreG form a complex that acts as a GTP-hydrolysis-dependent molecular chaperone, activating the urease apoprotein by helping to assemble the nickel containing metallocenter of UreC. The UreE protein probably delivers the nickel.

Its subcellular location is the cytoplasm. Functionally, required for maturation of urease via the functional incorporation of the urease nickel metallocenter. The sequence is that of Urease accessory protein UreD from Pseudomonas putida (strain W619).